Here is a 764-residue protein sequence, read N- to C-terminus: Putative alpha-1,3-mannosyltransferase MNN13 (764 aa).

At 1–13 (MIKPILGTKKIRR) the chain is on the cytoplasmic side. Residues 14–34 (VICIIIGLFCILLLIGIFKHN) traverse the membrane as a helical segment. At 35 to 764 (STNSVNNEAS…YLGDVWVGKY (730 aa)) the chain is on the lumenal side. Asn-45 and Asn-204 each carry an N-linked (GlcNAc...) asparagine glycan.

The protein belongs to the MNN1/MNT family.

It is found in the golgi apparatus membrane. It functions in the pathway protein modification; protein glycosylation. Functionally, responsible for addition of the terminal mannose residues to the outer chain of core N-linked polysaccharides and to O-linked mannotriose. Implicated in late Golgi modifications. This Candida albicans (strain SC5314 / ATCC MYA-2876) (Yeast) protein is Putative alpha-1,3-mannosyltransferase MNN13 (MNN13).